The primary structure comprises 720 residues: MSQTLQALADGLPVDAFAVLGPHPLADGRRQVRVLAPGAEAMGLIDSRGKLLARMQASAIDGVFEGILSIEGPYRLRIVWPDMVQEIEDPYAFAVTLDESLLLQIAAGDGQALRRALGAQHVQCGEVPGVRFAVWAPHAQRVAVVGDFNGWDVRRHPMRQRIGGFWELFLPRVEAGPRYKYAVTAADGRVLLKADPVARQTELPPATASVVPGTDTFAWTDAAWMAKRDPSAVPAPLSIYEVHAASWRRDGHNQPLDWPTLAEQLIPYVQQLRFTHIELLPITEHPFGGSWGYQPLGLYAPTARHGSPDGFAQFVDACHRAGIGVILDWVSAHFPDDAHGLAQFDGAALYEHADPREGMHRDWNTLIYNYGRPEVTAYLLGSALEWIDHYHLDGLRVDAVASMLYRDYGRAEGEWVPNAHGGRENLEAVAFLRQLNREIAAHFPGVLTIAEESTAWPGVTAAISDGGLGFTHKWNMGWMHDTLSYMQRDPAERAHHHSQLTFGLVYAFDERFVLPISHDEVVHGTGGLLGQMPGDDWRRFANLRAYLALMWAHPGDKLLFMGAEFGQWADWNHDQSLDWHLLEGARHRGVQLLVGDLNATLRRTPALYRGTHRAKGFDWSVADDARNSVLAFIRHDPDGGGVPLLAVSNLTAQPLHDYGVGVPRAGAWREILNTDSAHYGGSNLGNSGRLATEPMGMHGHAQRLRLTLPPLATIYLQAEK.

The Nucleophile role is filled by aspartate 398. Catalysis depends on glutamate 451, which acts as the Proton donor.

Belongs to the glycosyl hydrolase 13 family. GlgB subfamily. As to quaternary structure, monomer.

It catalyses the reaction Transfers a segment of a (1-&gt;4)-alpha-D-glucan chain to a primary hydroxy group in a similar glucan chain.. Its pathway is glycan biosynthesis; glycogen biosynthesis. Functionally, catalyzes the formation of the alpha-1,6-glucosidic linkages in glycogen by scission of a 1,4-alpha-linked oligosaccharide from growing alpha-1,4-glucan chains and the subsequent attachment of the oligosaccharide to the alpha-1,6 position. This Xanthomonas oryzae pv. oryzae (strain KACC10331 / KXO85) protein is 1,4-alpha-glucan branching enzyme GlgB 2.